The following is a 332-amino-acid chain: D-alanine--D-alanine ligase (332 aa).

The 201-residue stretch at 112 to 312 folds into the ATP-grasp domain; the sequence is KRIWRADGLP…YPDLCLRILA (201 aa). Residue 138–193 coordinates ATP; the sequence is FQELGAPMIVKPSREGSTIGLTKVTSLGQCEQAYRLAAQHDPEVLCEQFIDGDETT. Residues Asp265, Glu279, and Asn281 each coordinate Mg(2+).

It belongs to the D-alanine--D-alanine ligase family. It depends on Mg(2+) as a cofactor. Requires Mn(2+) as cofactor.

It is found in the cytoplasm. It carries out the reaction 2 D-alanine + ATP = D-alanyl-D-alanine + ADP + phosphate + H(+). It functions in the pathway cell wall biogenesis; peptidoglycan biosynthesis. In terms of biological role, cell wall formation. The protein is D-alanine--D-alanine ligase of Acidovorax ebreus (strain TPSY) (Diaphorobacter sp. (strain TPSY)).